Reading from the N-terminus, the 207-residue chain is Probable GTP-binding protein EngB (207 aa).

One can recognise an EngB-type G domain in the interval 22-193 (RVPEIVFAGR…LAHFDHYLSG (172 aa)). GTP is bound by residues 30-37 (GRSNVGKS), 57-61 (GKTRL), 75-78 (DIPG), 142-145 (TKDD), and 172-174 (YSS). Mg(2+) contacts are provided by S37 and T59.

The protein belongs to the TRAFAC class TrmE-Era-EngA-EngB-Septin-like GTPase superfamily. EngB GTPase family. Mg(2+) serves as cofactor.

Necessary for normal cell division and for the maintenance of normal septation. This chain is Probable GTP-binding protein EngB, found in Chlorobium luteolum (strain DSM 273 / BCRC 81028 / 2530) (Pelodictyon luteolum).